Here is a 50-residue protein sequence, read N- to C-terminus: uncharacterized protein (50 aa).

This is an uncharacterized protein from Sinorhizobium fredii (strain NBRC 101917 / NGR234).